Reading from the N-terminus, the 172-residue chain is 3-hydroxydecanoyl-[acyl-carrier-protein] dehydratase (172 aa).

His-71 is an active-site residue.

It belongs to the thioester dehydratase family. FabA subfamily. As to quaternary structure, homodimer.

The protein localises to the cytoplasm. The enzyme catalyses a (3R)-hydroxyacyl-[ACP] = a (2E)-enoyl-[ACP] + H2O. It catalyses the reaction (3R)-hydroxydecanoyl-[ACP] = (2E)-decenoyl-[ACP] + H2O. The catalysed reaction is (2E)-decenoyl-[ACP] = (3Z)-decenoyl-[ACP]. It functions in the pathway lipid metabolism; fatty acid biosynthesis. Functionally, necessary for the introduction of cis unsaturation into fatty acids. Catalyzes the dehydration of (3R)-3-hydroxydecanoyl-ACP to E-(2)-decenoyl-ACP and then its isomerization to Z-(3)-decenoyl-ACP. Can catalyze the dehydratase reaction for beta-hydroxyacyl-ACPs with saturated chain lengths up to 16:0, being most active on intermediate chain length. This Serratia proteamaculans (strain 568) protein is 3-hydroxydecanoyl-[acyl-carrier-protein] dehydratase.